The following is a 76-amino-acid chain: Serine proteinase inhibitor IA-1 (76 aa).

S1 bears the N-acetylserine mark.

It belongs to the protease inhibitor I9 family.

Its function is as follows. Specifically inhibits an endogenous intracellular serine proteinase (proteinase A). The chain is Serine proteinase inhibitor IA-1 from Pleurotus ostreatus (Oyster mushroom).